Here is a 606-residue protein sequence, read N- to C-terminus: Zinc finger protein 652 (606 aa).

At Ser-57 the chain carries Phosphoserine. Positions His-71–Arg-97 are enriched in basic and acidic residues. Disordered stretches follow at residues His-71–Lys-113 and Val-130–Gln-235. Over residues Glu-98 to Glu-109 the composition is skewed to acidic residues. A Phosphoserine modification is found at Ser-100. Phosphothreonine is present on Thr-103. Positions Val-137–Thr-149 are enriched in polar residues. The segment covering Glu-152–Gly-170 has biased composition (acidic residues). The segment covering Glu-171–Glu-183 has biased composition (basic and acidic residues). Low complexity predominate over residues Lys-184–Thr-209. 2 positions are modified to phosphoserine: Ser-197 and Ser-204. Residues Leu-245–His-268 form a C2H2-type 1 zinc finger. The C2H2-type 2; degenerate zinc-finger motif lies at Gln-272–Asp-294. 6 consecutive C2H2-type zinc fingers follow at residues Ile-299 to His-322, Phe-329 to His-351, Phe-357 to His-379, Phe-385 to His-407, Phe-413 to His-435, and Phe-441 to His-463. The C2H2-type 9; degenerate zinc-finger motif lies at Tyr-469 to Phe-492. The interval Val-498–His-606 is mediates interaction with CBFA2T3.

Belongs to the krueppel C2H2-type zinc-finger protein family. Interacts with CBFA2T3. In terms of tissue distribution, widely expressed with higher expression in breast, prostate, vulva and pancreas.

It is found in the nucleus. Functions as a transcriptional repressor. The polypeptide is Zinc finger protein 652 (ZNF652) (Homo sapiens (Human)).